The following is a 177-amino-acid chain: NADH-quinone oxidoreductase subunit B (177 aa).

[4Fe-4S] cluster is bound by residues cysteine 56, cysteine 57, cysteine 121, and cysteine 151.

The protein belongs to the complex I 20 kDa subunit family. In terms of assembly, NDH-1 is composed of 14 different subunits. Subunits NuoB, C, D, E, F, and G constitute the peripheral sector of the complex. [4Fe-4S] cluster serves as cofactor.

It is found in the cell inner membrane. It catalyses the reaction a quinone + NADH + 5 H(+)(in) = a quinol + NAD(+) + 4 H(+)(out). Functionally, NDH-1 shuttles electrons from NADH, via FMN and iron-sulfur (Fe-S) centers, to quinones in the respiratory chain. The immediate electron acceptor for the enzyme in this species is believed to be ubiquinone. Couples the redox reaction to proton translocation (for every two electrons transferred, four hydrogen ions are translocated across the cytoplasmic membrane), and thus conserves the redox energy in a proton gradient. The chain is NADH-quinone oxidoreductase subunit B from Rhodobacter capsulatus (Rhodopseudomonas capsulata).